The chain runs to 164 residues: MPRAAKRSPGYRVQNRKHKRKPCKDCVAQGLPLTRDAKYPGPRCATHHREFRTARSSTSWETRILATYGITGDEYWQIYEFQGGRCYICQRANGKKKRLSVDHDHKTGIVRGLLCTMCNKYTLGWARDCIEFFKRAIEYLLNPPAVQVIGERIAPVEADKLSRT.

This is Gene 59 protein (59) from Mycobacterium (Mycobacteriophage L5).